The sequence spans 339 residues: Quinolinate synthase (339 aa).

The iminosuccinate site is built by His-63 and Ser-81. A [4Fe-4S] cluster-binding site is contributed by Cys-126. Iminosuccinate is bound by residues 152–154 (YVN) and Ser-169. Residue Cys-211 coordinates [4Fe-4S] cluster. Residues 237–239 (HPE) and Thr-254 contribute to the iminosuccinate site. [4Fe-4S] cluster is bound at residue Cys-297.

It belongs to the quinolinate synthase family. Type 2 subfamily. Requires [4Fe-4S] cluster as cofactor.

It localises to the cytoplasm. The enzyme catalyses iminosuccinate + dihydroxyacetone phosphate = quinolinate + phosphate + 2 H2O + H(+). Its pathway is cofactor biosynthesis; NAD(+) biosynthesis; quinolinate from iminoaspartate: step 1/1. In terms of biological role, catalyzes the condensation of iminoaspartate with dihydroxyacetone phosphate to form quinolinate. The chain is Quinolinate synthase from Xylella fastidiosa (strain Temecula1 / ATCC 700964).